Reading from the N-terminus, the 62-residue chain is Large ribosomal subunit protein bL28 (62 aa).

The interval 1–22 is disordered; it reads MAKKCAISGKGPMSGNNVSHAK.

This sequence belongs to the bacterial ribosomal protein bL28 family.

In Sulfurimonas denitrificans (strain ATCC 33889 / DSM 1251) (Thiomicrospira denitrificans (strain ATCC 33889 / DSM 1251)), this protein is Large ribosomal subunit protein bL28.